The chain runs to 253 residues: Tyrosine recombinase XerD-like (253 aa).

In terms of domain architecture, Core-binding (CB) spans 8–81; it reads KQLTTQITNF…AVNQFLLYLY (74 aa). The 161-residue stretch at 93–253 folds into the Tyr recombinase domain; the sequence is SETAPLPSQQ…PVTLEKYYKT (161 aa). Active-site residues include Lys157 and Arg218. Tyr250 functions as the O-(3'-phospho-DNA)-tyrosine intermediate in the catalytic mechanism.

This sequence belongs to the 'phage' integrase family. XerD-like subfamily.

It localises to the cytoplasm. Putative tyrosine recombinase. Not involved in the cutting and rejoining of the recombining DNA molecules on dif(SL) site. The chain is Tyrosine recombinase XerD-like from Streptococcus thermophilus (strain CNRZ 1066).